The sequence spans 210 residues: Thymidylate kinase (210 aa).

9 to 16 contributes to the ATP binding site; sequence GPEGAGKT.

It belongs to the thymidylate kinase family.

The catalysed reaction is dTMP + ATP = dTDP + ADP. Functionally, phosphorylation of dTMP to form dTDP in both de novo and salvage pathways of dTTP synthesis. This is Thymidylate kinase from Thermomicrobium roseum (strain ATCC 27502 / DSM 5159 / P-2).